A 439-amino-acid polypeptide reads, in one-letter code: MNLLPNIESPVTRQEKMATVWDEAEQDGIGEEVLKMSTEEIIQRTRLLDSEIKIMKSEVLRVTHELQAMKDKIKENSEKIKVNKTLPYLVSNVIELLDVDPNDQEEDGANIDLDSQRKGKCAVIKTSTRQTYFLPVIGLVDAEKLKPGDLVGVNKDSYLILETLPTEYDSRVKAMEVDERPTEQYSDIGGLDKQIQELVEAIVLPMNHKEKFENLGIQPPKGVLMYGPPGTGKTLLARACAAQTKATFLKLAGPQLVQMFIGDGAKLVRDAFALAKEKAPSIIFIDELDAIGTKRFDSEKAGDREVQRTMLELLNQLDGFQPNTQVKVIAATNRVDILDPALLRSGRLDRKIEFPMPNEEARARIMQIHSRKMNVSPDVNYEELARCTDDFNGAQCKAVCVEAGMIALRRGATELTHEDYMEGILEVQAKKKANLQYYA.

Met-1 carries the N-acetylmethionine modification. Ser-9 is subject to Phosphoserine. Residue 227–234 coordinates ATP; that stretch reads GPPGTGKT. Position 376 is a phosphoserine (Ser-376).

It belongs to the AAA ATPase family. As to quaternary structure, component of the 19S proteasome regulatory particle complex. The 26S proteasome consists of a 20S core particle (CP) and two 19S regulatory subunits (RP). The regulatory particle is made of a lid composed of 9 subunits, a base containing 6 ATPases including PSMC3 and few additional components. Interacts with PAAF1. (Microbial infection) Interacts with HIV-1 Tat. Sumoylated by UBE2I in response to MEKK1-mediated stimuli.

The protein localises to the cytoplasm. Its subcellular location is the nucleus. Its function is as follows. Component of the 26S proteasome, a multiprotein complex involved in the ATP-dependent degradation of ubiquitinated proteins. This complex plays a key role in the maintenance of protein homeostasis by removing misfolded or damaged proteins, which could impair cellular functions, and by removing proteins whose functions are no longer required. Therefore, the proteasome participates in numerous cellular processes, including cell cycle progression, apoptosis, or DNA damage repair. PSMC3 belongs to the heterohexameric ring of AAA (ATPases associated with diverse cellular activities) proteins that unfolds ubiquitinated target proteins that are concurrently translocated into a proteolytic chamber and degraded into peptides. The polypeptide is 26S proteasome regulatory subunit 6A (PSMC3) (Homo sapiens (Human)).